The chain runs to 511 residues: L-arabinose isomerase (511 aa).

Glu-316, Glu-343, His-360, and His-459 together coordinate Mn(2+).

It belongs to the arabinose isomerase family. Requires Mn(2+) as cofactor.

The enzyme catalyses beta-L-arabinopyranose = L-ribulose. Its pathway is carbohydrate degradation; L-arabinose degradation via L-ribulose; D-xylulose 5-phosphate from L-arabinose (bacterial route): step 1/3. In terms of biological role, catalyzes the conversion of L-arabinose to L-ribulose. This is L-arabinose isomerase from Arthrobacter sp. (strain FB24).